The following is a 140-amino-acid chain: Blasticidin-S deaminase (140 aa).

One can recognise a CMP/dCMP-type deaminase domain in the interval 8 to 140; the sequence is QQDLELVEVA…ELIPLKYTRN (133 aa). Cys-59 is a Zn(2+) binding site. Residue Glu-61 is the Proton donor of the active site. 2 residues coordinate Zn(2+): Cys-100 and Cys-103.

It belongs to the cytidine and deoxycytidylate deaminase family. Zn(2+) serves as cofactor.

It catalyses the reaction blasticidin S + H2O + H(+) = deaminohydroxyblasticidin S + NH4(+). Catalyzes the deamination of the cytosine moiety of the antibiotics blasticidin S, cytomycin and acetylblasticidin S. The chain is Blasticidin-S deaminase (bsr) from Bacillus cereus.